The following is a 502-amino-acid chain: MKKLKILMAASECVPFAKEGGLADVVGVLPKHLARMGHDVRVVMPRYKRVDRERYGLKQLPGVLVVPMGVIGNQYCGVWEGRIPGSDVPVYFLEHEGYYDRDGLYEVNNEGFLDNDNRFVFLSKAALELPKMIGFEPDLLHAHDWHTAAIPVLVNTTYAADPYVGGKATVLSVHNMQHQGNFYEGLMDVLGIGWEHFTFLGLENNGEANLLKGGLYHATVLNTVSEGYAREMQTPEYGWGLDGVVRERAADLYGILNGVDYEDWNPEVDPYIAARYSAADLSGKKLCKRDLQRTFGLPERDDVPLFGMVSRLVKQKGVDILAEAIHRILALDVQFVMLGAGEPWTHFYFGDIKNAYPDKFNIFVGYNNPLSHQIEAGADFFLMPSAFEPCGLNQMYSLRYGTLPIVRATGGLDDSVENFDEKTLVGTGFKFWSRDAGALFDTVGWAVHTWYHRKDAMERLIANAMAKRFTWEDAAARYEDLYGRALRKRLGEKEFARRYGKG.

Lysine 18 provides a ligand contact to ADP-alpha-D-glucose.

The protein belongs to the glycosyltransferase 1 family. Bacterial/plant glycogen synthase subfamily.

The enzyme catalyses [(1-&gt;4)-alpha-D-glucosyl](n) + ADP-alpha-D-glucose = [(1-&gt;4)-alpha-D-glucosyl](n+1) + ADP + H(+). The protein operates within glycan biosynthesis; glycogen biosynthesis. In terms of biological role, synthesizes alpha-1,4-glucan chains using ADP-glucose. The sequence is that of Glycogen synthase 1 from Geobacter metallireducens (strain ATCC 53774 / DSM 7210 / GS-15).